We begin with the raw amino-acid sequence, 483 residues long: Cysteine--tRNA ligase (483 aa).

Position 29 (Cys29) interacts with Zn(2+). A 'HIGH' region motif is present at residues 31 to 41 (ITVYDYCHLGH). Zn(2+)-binding residues include Cys215, His240, and Glu244. Positions 272–276 (KMSKS) match the 'KMSKS' region motif. Lys275 serves as a coordination point for ATP.

The protein belongs to the class-I aminoacyl-tRNA synthetase family. In terms of assembly, monomer. It depends on Zn(2+) as a cofactor.

The protein resides in the cytoplasm. The catalysed reaction is tRNA(Cys) + L-cysteine + ATP = L-cysteinyl-tRNA(Cys) + AMP + diphosphate. This Synechocystis sp. (strain ATCC 27184 / PCC 6803 / Kazusa) protein is Cysteine--tRNA ligase (cysS).